A 657-amino-acid chain; its full sequence is Probable potassium transport system protein Kup (657 aa).

Transmembrane regions (helical) follow at residues 14–34 (IGGL…SPLY), 47–67 (ADIV…QTTI), 96–116 (IQWL…DGII), 140–160 (TIVY…QFGT), 166–186 (FFAP…FIQI), 201–221 (AYHL…VFLC), 242–262 (ISWI…AAYL), 283–303 (LIMP…AAVI), 340–360 (LYIP…VLHF), 371–391 (GLAI…YLIM), 396–416 (LYFM…FLIA), and 425–445 (GYVT…WYLA).

This sequence belongs to the HAK/KUP transporter (TC 2.A.72) family.

Its subcellular location is the cell inner membrane. The catalysed reaction is K(+)(in) + H(+)(in) = K(+)(out) + H(+)(out). Functionally, transport of potassium into the cell. Likely operates as a K(+):H(+) symporter. This Flavobacterium johnsoniae (strain ATCC 17061 / DSM 2064 / JCM 8514 / BCRC 14874 / CCUG 350202 / NBRC 14942 / NCIMB 11054 / UW101) (Cytophaga johnsonae) protein is Probable potassium transport system protein Kup.